The primary structure comprises 307 residues: Exosome complex component RRP45A (307 aa).

It belongs to the RNase PH family. In terms of tissue distribution, expressed in roots, leaves, stems, buds and siliques.

It is found in the cytoplasm. The protein resides in the nucleus. In terms of biological role, probable 3'-&gt;5' exoribonuclease involved in the regulation of cuticular wax biosynthesis. Can perform exosomal functions and partially complement the yeast rrp45 null mutant. The chain is Exosome complex component RRP45A from Arabidopsis thaliana (Mouse-ear cress).